The following is a 99-amino-acid chain: Malonate decarboxylase acyl carrier protein (99 aa).

Residue Ser-25 is modified to O-(phosphoribosyl dephospho-coenzyme A)serine.

The protein belongs to the MdcC family. In terms of processing, covalently binds the prosthetic group of malonate decarboxylase.

The protein localises to the cytoplasm. Functionally, subunit of malonate decarboxylase, it is an acyl carrier protein to which acetyl and malonyl thioester residues are bound via a 2'-(5''-phosphoribosyl)-3'-dephospho-CoA prosthetic group and turn over during the catalytic mechanism. The sequence is that of Malonate decarboxylase acyl carrier protein from Pseudomonas paraeruginosa (strain DSM 24068 / PA7) (Pseudomonas aeruginosa (strain PA7)).